A 1838-amino-acid polypeptide reads, in one-letter code: Collagen alpha-1(V) chain (1838 aa).

The N-terminal stretch at 1–37 (MDVHTRWKARSALRPGAPLLPPLLLLLLWAPPPSRAA) is a signal peptide. In terms of domain architecture, Laminin G-like spans 72-244 (DVAYRVTKDA…DYCEHYSPDC (173 aa)). The nonhelical region stretch occupies residues 231 to 443 (RAAYDYCEHY…MPANQDTIYE (213 aa)). Y234, Y236, Y240, Y262, and Y263 each carry sulfotyrosine. Disordered stretches follow at residues 242–269 (PDCD…GDGE), 281–457 (EDPE…QKGE), 470–520 (PPGP…GTML), 526–545 (FGGG…QESQ), and 559–1574 (GPAG…EVIQ). Residues 258-269 (NPDEYYTEGDGE) are compositionally biased toward acidic residues. The segment covering 285 to 304 (DLGKEPTPSKKPVEAAKETT) has biased composition (basic and acidic residues). The span at 309-323 (ELTPTPTEAAPMPET) shows a compositional bias: low complexity. Sulfotyrosine is present on residues Y338, Y340, Y346, and Y347. The segment covering 377 to 388 (PTSTADTSNSSN) has biased composition (polar residues). Residues 396–406 (GADDLEGEFTE) show a composition bias toward acidic residues. Sulfotyrosine is present on residues Y416, Y417, Y420, and Y421. Residues 417 to 428 (YDPYYDPTSSPS) are compositionally biased toward low complexity. Residues 444-558 (GIGGPRGEKG…ILQQARLALR (115 aa)) are interrupted collagenous region. Residues 470–485 (PPGPEGPAGLPGPPGT) show a composition bias toward pro residues. A compositionally biased stretch (low complexity) spans 506-520 (LPGADGLPGPPGTML). Residues 559–1570 (GPAGPMGLTG…GPPGPPGPPG (1012 aa)) form a triple-helical region region. Residues P570 and P576 each carry the hydroxyproline modification. Low complexity predominate over residues 587–597 (DVGPQGPRGVQ). A Hydroxyproline modification is found at P621. K627 is modified (5-hydroxylysine). At P639 the chain carries Hydroxyproline. A 5-hydroxylysine modification is found at K642. Residues P648, P654, P657, P675, and P678 each carry the hydroxyproline modification. Over residues 671–686 (PRGLPGEPGPRGLLGP) the composition is skewed to low complexity. Position 687 is a 5-hydroxylysine (K687). The segment covering 687–696 (KGPPGPPGPP) has biased composition (pro residues). A hydroxyproline mark is found at P690, P696, and P705. K708 carries the post-translational modification 5-hydroxylysine. Residues P717, P720, P726, and P732 each carry the hydroxyproline modification. Residues 722-741 (QQGNPGAQGLPGPQGAIGPP) are compositionally biased toward low complexity. K744 is subject to 5-hydroxylysine. Residues 747–756 (LGKPGLPGMP) are compositionally biased toward low complexity. Hydroxyproline occurs at positions 750, 756, 762, 765, and 771. K774 is subject to 5-hydroxylysine. 2 positions are modified to hydroxyproline: P780 and P789. K795, K804, K807, and K810 each carry 5-hydroxylysine. At P816 the chain carries Hydroxyproline. K819 is modified (5-hydroxylysine). Residue P834 is modified to Hydroxyproline. Positions 837–846 (RGEDGPEGPK) are enriched in basic and acidic residues. The residue at position 846 (K846) is a 5-hydroxylysine. P861 is modified (hydroxyproline). A 5-hydroxylysine modification is found at K864. Over residues 867–876 (LGVPGLPGYP) the composition is skewed to low complexity. Hydroxyproline is present on residues P870, P873, and P876. Position 882 is a 5-hydroxylysine (K882). 2 positions are modified to hydroxyproline: P888 and P891. At K897 the chain carries 5-hydroxylysine. Residues P903 and P906 each carry the hydroxyproline modification. Residues 908-917 (PRGQRGPTGP) show a composition bias toward low complexity. A hydroxyproline mark is found at P930 and P945. 2 stretches are compositionally biased toward low complexity: residues 971–990 (KDGL…QGKT) and 999–1011 (VGPQ…TGPM). P1017, P1020, P1023, and P1029 each carry hydroxyproline. The segment covering 1088–1104 (SPGERGPAGAAGPIGIP) has biased composition (low complexity). Over residues 1106–1115 (RPGPQGPPGP) the composition is skewed to pro residues. Over residues 1116 to 1140 (AGEKGAPGEKGPQGPAGRDGLQGPV) the composition is skewed to low complexity. P1221 and P1224 each carry hydroxyproline. A compositionally biased stretch (low complexity) spans 1259–1268 (PSGAPGADGP). 2 stretches are compositionally biased toward pro residues: residues 1380-1398 (TGEP…PGPA) and 1454-1469 (SPGP…PPGL). P1467 and P1470 each carry hydroxyproline. Residues 1485-1494 (PGLIGLIGPP) are compositionally biased toward low complexity. Over residues 1526–1541 (PIGPPGPPGLPGPPGP) the composition is skewed to pro residues. Residues 1542-1554 (KGAKGSSGPTGPK) show a composition bias toward low complexity. Residues 1560–1569 (PGPPGPPGPP) are compositionally biased toward pro residues. Residues 1571–1605 (EVIQPLPIQASRTRRNIDASQLLDDGNGENYVDYA) are nonhelical region. 2 positions are modified to sulfotyrosine: Y1601 and Y1604. The propeptide at 1606–1838 (DGMEEIFGSL…FEVGPACFMG (233 aa)) is C-terminal propeptide. In terms of domain architecture, Fibrillar collagen NC1 spans 1609 to 1837 (EEIFGSLNSL…GFEVGPACFM (229 aa)). 3 cysteine pairs are disulfide-bonded: C1639–C1671, C1680–C1835, and C1746–C1789. Positions 1657, 1659, 1660, 1662, and 1665 each coordinate Ca(2+).

This sequence belongs to the fibrillar collagen family. As to quaternary structure, trimers of two alpha 1(V) and one alpha 2(V) chains in most tissues and trimers of one alpha 1(V), one alpha 2(V), and one alpha 3(V) chains in placenta. Interacts with CSPG4. Prolines at the third position of the tripeptide repeating unit (G-X-Y) are hydroxylated in some or all of the chains. In terms of processing, sulfated on 40% of tyrosines.

The protein resides in the secreted. The protein localises to the extracellular space. Its subcellular location is the extracellular matrix. In terms of biological role, type V collagen is a member of group I collagen (fibrillar forming collagen). It is a minor connective tissue component of nearly ubiquitous distribution. Type V collagen binds to DNA, heparan sulfate, thrombospondin, heparin, and insulin. The protein is Collagen alpha-1(V) chain (COL5A1) of Homo sapiens (Human).